The primary structure comprises 365 residues: Outer membrane lipoprotein A (365 aa).

An N-terminal signal peptide occupies residues 1–19 (MNIATKLMASLVASVVLTA). The disordered stretch occupies residues 19-121 (ACSGGGSSGS…KGEELSKDKS (103 aa)). A lipid anchor (N-palmitoyl cysteine) is attached at Cys-20. The S-diacylglycerol cysteine moiety is linked to residue Cys-20. Basic and acidic residues-rich tracts occupy residues 48-68 (EQPK…EPKE) and 105-121 (NPQK…KDKS).

It is found in the cell outer membrane. In Actinobacillus pleuropneumoniae (Haemophilus pleuropneumoniae), this protein is Outer membrane lipoprotein A (omlA).